The following is a 1211-amino-acid chain: DNA-directed RNA polymerase subunit beta' (1211 aa).

Cys-60, Cys-62, Cys-75, and Cys-78 together coordinate Zn(2+). Residues Asp-449, Asp-451, and Asp-453 each coordinate Mg(2+). Zn(2+)-binding residues include Cys-818, Cys-892, Cys-899, and Cys-902.

Belongs to the RNA polymerase beta' chain family. In terms of assembly, the RNAP catalytic core consists of 2 alpha, 1 beta, 1 beta' and 1 omega subunit. When a sigma factor is associated with the core the holoenzyme is formed, which can initiate transcription. It depends on Mg(2+) as a cofactor. Zn(2+) serves as cofactor.

It catalyses the reaction RNA(n) + a ribonucleoside 5'-triphosphate = RNA(n+1) + diphosphate. DNA-dependent RNA polymerase catalyzes the transcription of DNA into RNA using the four ribonucleoside triphosphates as substrates. The chain is DNA-directed RNA polymerase subunit beta' from Limosilactobacillus reuteri (strain DSM 20016) (Lactobacillus reuteri).